A 687-amino-acid chain; its full sequence is Polyphosphate kinase (687 aa).

Asn-45 is an ATP binding site. The Mg(2+) site is built by Arg-375 and Arg-405. His-435 (phosphohistidine intermediate) is an active-site residue. ATP contacts are provided by Tyr-472, Arg-568, and His-596.

It belongs to the polyphosphate kinase 1 (PPK1) family. It depends on Mg(2+) as a cofactor. Post-translationally, an intermediate of this reaction is the autophosphorylated ppk in which a phosphate is covalently linked to a histidine residue through a N-P bond.

The catalysed reaction is [phosphate](n) + ATP = [phosphate](n+1) + ADP. Functionally, catalyzes the reversible transfer of the terminal phosphate of ATP to form a long-chain polyphosphate (polyP). This Paraburkholderia phytofirmans (strain DSM 17436 / LMG 22146 / PsJN) (Burkholderia phytofirmans) protein is Polyphosphate kinase.